The primary structure comprises 117 residues: Serine rich endogenous peptide 5 (117 aa).

Positions 1-31 (MATKTSNFVSLRVSLFILLLFISSQVAIADA) are cleaved as a signal peptide. Residues 41-55 (LQIVRRSRSQRGRQY) carry the SCOOP motif motif. Residues 42–51 (QIVRRSRSQR) show a composition bias toward basic residues. The tract at residues 42–117 (QIVRRSRSQR…LPYASSPTST (76 aa)) is disordered. The short motif at 47 to 49 (SRS) is the SxS motif essential for MIK2 binding element. Positions 60 to 84 (LRVPPPPPPPLPQMPSAATPPPMPQ) are enriched in pro residues.

Interacts with MIK2 (via extracellular leucine-rich repeat domain); this interaction triggers the formation of complex between MIK2 and the BAK1/SERK3 and SERK4 coreceptors, and subsequent BAK1 activation by phosphorylation.

The protein resides in the cell membrane. The protein localises to the secreted. It is found in the extracellular space. Its subcellular location is the apoplast. Functionally, brassicaceae-specific phytocytokine (plant endogenous peptide released into the apoplast) perceived by MIK2 in a BAK1/SERK3 and SERK4 coreceptors-dependent manner, that modulates various physiological and antimicrobial processes including growth prevention and reactive oxygen species (ROS) response regulation. In Arabidopsis thaliana (Mouse-ear cress), this protein is Serine rich endogenous peptide 5.